Here is an 830-residue protein sequence, read N- to C-terminus: MELNRRDFMKANAAVAAAAAAGITIPVKNVHAADDDMGIRWDKAPCRYCGTGCSVLVGTKDGRVVATQGDPDAEVNRGLNCIKGYFLSKIMYGADRVQTPLLRMKDGKFHKEGDFTPVSWDQAFTVMADKIKAILKEKKDPNAIGMFSSGQTTIFEGYAKVKLWKAGLRSNTIDPNARHCMASAAVAFLRTFGMDEPMGCYNDIEKTDAFVLWGSNMAEMHPILWSRISDRRLSSDKVKVVVMSTFEHRSFELADTPIIFKPHSDLAILNYIANYIIQNDKVNWDFVNKHTKFKRGETDIGYGLRPEHPLEVAAKNRKTAGKMYDSDFEEFKKIVAPYTLEEAHRISGVPKDQLETLAKMYADPQQNLVSFWTMGFNQHTRGVWVNHMVYNVHLLTGKISKPGCGPFSLTGQPSACGTAREVGTFVHRLPADMVVTNPKHVEIAENIWKLPKGTISNKPGFPAVQQSRALKDGKLNFLWQLCTNNMQGGPNINEEIFPGWRNPDNLIVVSDPYPSASAVAADLILPTCMWVEKEGAYGNAERRTQFWRQQVKGPGQSRSDLWQIVEFSKYFKTEEVWSEELLAQMPEYRGKTLYEVLYLNGEVNKFQTPTNVPGYINDEAEDFGFYLQKGLFEEYASFGRGHGHDLADFDTYHQVRGLRWPVVDGKETLWRYREGYDPYVKAGEEVSFYGYPDKKAIILGVPYEAPAESPDEEYDLWLCTGRVLEHWHTGTMTRRVPELHKAFPNNLCWMHPTDAKKRGLRHGDKVKLITRRGEMISHLDTRGRNKCPEGLIYTTFFDAGQLANKLTLDATDPISGETDYKKCAVKVVKA.

The tat-type signal signal peptide spans 1–32; the sequence is MELNRRDFMKANAAVAAAAAAGITIPVKNVHA. Residues 39 to 95 form the 4Fe-4S Mo/W bis-MGD-type domain; that stretch reads IRWDKAPCRYCGTGCSVLVGTKDGRVVATQGDPDAEVNRGLNCIKGYFLSKIMYGAD. [4Fe-4S] cluster is bound by residues C46, C49, C53, and C81. Residues K83, Q151, N176, C180, 213–220, 244–248, M374, Q378, N484, 510–511, K533, D560, and 720–729 each bind Mo-bis(molybdopterin guanine dinucleotide); these read WGSNMAEM, STFEH, SD, and TGRVLEHWHT. Position 796 (F796) interacts with substrate. Residues N804 and K821 each coordinate Mo-bis(molybdopterin guanine dinucleotide).

Belongs to the prokaryotic molybdopterin-containing oxidoreductase family. NasA/NapA/NarB subfamily. Component of the periplasmic nitrate reductase NapAB complex composed of NapA and NapB. [4Fe-4S] cluster is required as a cofactor. Requires Mo-bis(molybdopterin guanine dinucleotide) as cofactor. Post-translationally, predicted to be exported by the Tat system. The position of the signal peptide cleavage has not been experimentally proven.

Its subcellular location is the periplasm. The catalysed reaction is 2 Fe(II)-[cytochrome] + nitrate + 2 H(+) = 2 Fe(III)-[cytochrome] + nitrite + H2O. Its function is as follows. Catalytic subunit of the periplasmic nitrate reductase complex NapAB. Receives electrons from NapB and catalyzes the reduction of nitrate to nitrite. The polypeptide is Periplasmic nitrate reductase (Mannheimia succiniciproducens (strain KCTC 0769BP / MBEL55E)).